The chain runs to 804 residues: E3 ubiquitin-protein ligase RNF10 (804 aa).

Low complexity-rich tracts occupy residues 1–31 (MPQSSPSAAATASDMDKNSGSNSSSASSGSS), 78–90 (SNQSRRSNSQKSK), and 104–113 (SKPFSSSSNG). The tract at residues 1-134 (MPQSSPSAAA…AEFSPAQFSG (134 aa)) is disordered. Residue Ser-5 is modified to Phosphoserine. At Ser-110 the chain carries Phosphoserine. Residues 114 to 124 (GRRDEVAEAQR) show a composition bias toward basic and acidic residues. Position 128 is a phosphoserine (Ser-128). Residues 225–267 (CPICLYPPTAAKITRCGHIFCWACILHYLSLSEKTWSKCPICY) form an RING-type zinc finger. Disordered regions lie at residues 589 to 611 (DIEKRKRQRQKKAREERRRERRI), 646 to 665 (DSALGPTSTEGHGALSLSPL), and 715 to 804 (KADG…VHTK). The span at 601-611 (AREERRRERRI) shows a compositional bias: basic and acidic residues. A compositionally biased stretch (polar residues) spans 646-655 (DSALGPTSTE). The span at 715–729 (KADGWPKTAPKKDDN) shows a compositional bias: basic and acidic residues. The segment covering 795 to 804 (LFSTSVVHTK) has biased composition (polar residues).

Belongs to the RNF10 family. In terms of assembly, interacts with MEOX2.

The protein localises to the cytoplasm. Its subcellular location is the nucleus. It catalyses the reaction S-ubiquitinyl-[E2 ubiquitin-conjugating enzyme]-L-cysteine + [acceptor protein]-L-lysine = [E2 ubiquitin-conjugating enzyme]-L-cysteine + N(6)-ubiquitinyl-[acceptor protein]-L-lysine.. Its pathway is protein modification; protein ubiquitination. Its function is as follows. E3 ubiquitin-protein ligase that catalyzes monoubiquitination of 40S ribosomal proteins RPS2/us5 and RPS3/us3 in response to ribosome stalling. Part of a ribosome quality control that takes place when ribosomes have stalled during translation initiation (iRQC): RNF10 acts by mediating monoubiquitination of RPS2/us5 and RPS3/us3, promoting their degradation by the proteasome. Also promotes ubiquitination of 40S ribosomal proteins in response to ribosome stalling during translation elongation. The action of RNF10 in iRQC is counteracted by USP10. May also act as a transcriptional factor involved in the regulation of MAG (Myelin-associated glycoprotein) expression. Acts as a regulator of Schwann cell differentiation and myelination. This Mus musculus (Mouse) protein is E3 ubiquitin-protein ligase RNF10.